The chain runs to 441 residues: MKAISLGLISSIIFSIVLAKNSSGSGSSTGCFGCFRKKPKKKILATEVAKPVKAPETADFDPKLPNLKFIEEFEPITIEGCKSRLHELDEPFVSETDGMIIDKVTGFSRRENDSVLSGWYIRPYEEGYENMIKVNFIPLREYYKRMENRPPKQYDGPPPIPDMPQGYVPPKKEEIPVEQYVIQLSEEDPYLLQEEDALSLMEYDAETLNEGDAETLNEGDAETLNEYDAGTLNEEDAGTTNEAGEGTTNEEGEGAANEYDAETLNEYDADTLNEYDAGTLNEYDAGTLNEEEGSTTNEAGEGTSNEAGEGTANDDEELDEEVASIFDDDEHADDLSLLDYDENSNENQENVKKGNENEGEQKGNENEGEQKGKKKKAKEKSKKKVKNKPTMTTKKKKKKEKKKKKKEKEKKKEKKVKVEVIMDHFSEMEKMMNNKIKHWNK.

The segment at residues 1 to 15 is a signal peptide (or 24); sequence MKAISLGLISSIIFS. N-linked (GlcNAc...) asparagine glycosylation is found at Asn-21 and Asn-112. 18 consecutive repeat copies span residues 186-193, 194-201, 202-209, 210-217, 218-225, 226-233, 234-241, 242-249, 250-257, 258-265, 266-273, 274-281, 282-289, 290-297, 298-305, 306-313, 353-360, and 361-368. The segment at 186 to 313 is 16 X 8 AA tandem repeats; it reads EEDPYLLQEE…SNEAGEGTAN (128 aa). A disordered region spans residues 232–416; sequence LNEEDAGTTN…EKEKKKEKKV (185 aa). Residues 238–247 show a composition bias toward low complexity; sequence GTTNEAGEGT. Positions 248–273 are enriched in acidic residues; that stretch reads TNEEGEGAANEYDAETLNEYDADTLN. The segment covering 294–306 has biased composition (polar residues); that stretch reads STTNEAGEGTSNE. The segment covering 312–332 has biased composition (acidic residues); it reads ANDDEELDEEVASIFDDDEHA. Basic and acidic residues predominate over residues 349 to 371; the sequence is ENVKKGNENEGEQKGNENEGEQK. The segment at 353 to 370 is 2 X 9 AA tandem repeats; that stretch reads KGNENEGEQKGNENEGEQ. The segment covering 372–415 has biased composition (basic residues); the sequence is GKKKKAKEKSKKKVKNKPTMTTKKKKKKEKKKKKKEKEKKKEKK.

It is found in the cell membrane. Its function is as follows. During infection, this phosphoprotein probably modulates the structure of the red cell membrane to the advantage of the parasite, although its precise function is not known. The polypeptide is Acidic phosphoprotein (PCEMA1) (Plasmodium chabaudi).